Consider the following 151-residue polypeptide: SsrA-binding protein (151 aa).

It belongs to the SmpB family.

It is found in the cytoplasm. Functionally, required for rescue of stalled ribosomes mediated by trans-translation. Binds to transfer-messenger RNA (tmRNA), required for stable association of tmRNA with ribosomes. tmRNA and SmpB together mimic tRNA shape, replacing the anticodon stem-loop with SmpB. tmRNA is encoded by the ssrA gene; the 2 termini fold to resemble tRNA(Ala) and it encodes a 'tag peptide', a short internal open reading frame. During trans-translation Ala-aminoacylated tmRNA acts like a tRNA, entering the A-site of stalled ribosomes, displacing the stalled mRNA. The ribosome then switches to translate the ORF on the tmRNA; the nascent peptide is terminated with the 'tag peptide' encoded by the tmRNA and targeted for degradation. The ribosome is freed to recommence translation, which seems to be the essential function of trans-translation. This chain is SsrA-binding protein, found in Wolinella succinogenes (strain ATCC 29543 / DSM 1740 / CCUG 13145 / JCM 31913 / LMG 7466 / NCTC 11488 / FDC 602W) (Vibrio succinogenes).